Consider the following 328-residue polypeptide: Carbonic anhydrase-related protein 11 (328 aa).

A signal peptide spans 1-23; the sequence is MGAAPRLSAPRVLVLWAALGAAA. The Alpha-carbonic anhydrase domain occupies 33–303; that stretch reads DWWSYKDNLQ…LAHRALRGNR (271 aa). Residue asparagine 118 is glycosylated (N-linked (GlcNAc...) asparagine). Residues 300 to 328 are disordered; that stretch reads RGNRDPRHPERRCRGPNYRLHVDDVPHGL. The segment covering 319–328 has biased composition (basic and acidic residues); sequence LHVDDVPHGL.

This sequence belongs to the alpha-carbonic anhydrase family.

The protein localises to the secreted. Does not have a catalytic activity. The protein is Carbonic anhydrase-related protein 11 (CA11) of Ovis aries (Sheep).